The primary structure comprises 317 residues: Protein-L-isoaspartate O-methyltransferase (317 aa).

Ser-59 is an active-site residue.

Belongs to the methyltransferase superfamily. L-isoaspartyl/D-aspartyl protein methyltransferase family. Monomer.

It localises to the cytoplasm. The enzyme catalyses [protein]-L-isoaspartate + S-adenosyl-L-methionine = [protein]-L-isoaspartate alpha-methyl ester + S-adenosyl-L-homocysteine. Its function is as follows. Catalyzes the methyl esterification of L-isoaspartyl residues in peptides and proteins that result from spontaneous decomposition of normal L-aspartyl and L-asparaginyl residues. It plays a role in the repair and/or degradation of damaged proteins. This Thermotoga maritima (strain ATCC 43589 / DSM 3109 / JCM 10099 / NBRC 100826 / MSB8) protein is Protein-L-isoaspartate O-methyltransferase (pcm).